The following is a 161-amino-acid chain: Phosphopantetheine adenylyltransferase (161 aa).

Position 10 (Thr10) interacts with substrate. ATP contacts are provided by residues 10-11 (TF) and His18. The substrate site is built by Lys42, Leu74, and Arg88. ATP is bound by residues 89 to 91 (GLR), Glu99, and 124 to 130 (NSFISST).

This sequence belongs to the bacterial CoaD family. As to quaternary structure, homohexamer. Mg(2+) serves as cofactor.

The protein resides in the cytoplasm. The catalysed reaction is (R)-4'-phosphopantetheine + ATP + H(+) = 3'-dephospho-CoA + diphosphate. It functions in the pathway cofactor biosynthesis; coenzyme A biosynthesis; CoA from (R)-pantothenate: step 4/5. Its function is as follows. Reversibly transfers an adenylyl group from ATP to 4'-phosphopantetheine, yielding dephospho-CoA (dPCoA) and pyrophosphate. This Photobacterium profundum (strain SS9) protein is Phosphopantetheine adenylyltransferase.